The chain runs to 115 residues: Large ribosomal subunit protein bL19 (115 aa).

The protein belongs to the bacterial ribosomal protein bL19 family.

In terms of biological role, this protein is located at the 30S-50S ribosomal subunit interface and may play a role in the structure and function of the aminoacyl-tRNA binding site. The protein is Large ribosomal subunit protein bL19 of Pectobacterium carotovorum subsp. carotovorum (strain PC1).